Consider the following 409-residue polypeptide: Nucleoprotein (409 aa).

2 disordered regions span residues 1–84 and 121–194; these read MASG…KGGR and ADTK…DSGD. A compositionally biased stretch (low complexity) spans 15–31; sequence PVIKLGGPKPPKVGSSG. The tract at residues 29 to 160 is RNA-binding; that stretch reads SSGNASWFQA…GNFRWDFIPL (132 aa). A CoV N NTD domain is found at 31–156; it reads GNASWFQAIK…GGPDGNFRWD (126 aa). Basic residues predominate over residues 70-84; the sequence is YWRRQARFKPGKGGR. A compositionally biased stretch (low complexity) spans 162–179; sequence RGRSGRSTAASSAAASRA. The span at 180–192 shows a compositional bias: basic and acidic residues; the sequence is PSREGSRGRRSDS. Residues serine 190 and serine 192 each carry the phosphoserine; by host modification. The CoV N CTD domain maps to 215–331; sequence TKAKADEMAH…QCVDGVGTRP (117 aa). A dimerization region spans residues 226 to 333; sequence RYCKRTIPPN…VDGVGTRPKD (108 aa). 2 disulfide bridges follow: cysteine 281–cysteine 308 and cysteine 320–cysteine 323. The disordered stretch occupies residues 327-396; it reads VGTRPKDDEP…QLEFYDEPKV (70 aa). The segment covering 358–367 has biased composition (basic residues); it reads QRPKKEKKLK. Residues 368–384 show a composition bias toward basic and acidic residues; that stretch reads KQDDEADKALTSDEERN. Threonine 378 is subject to Phosphothreonine; by host. Residue serine 379 is modified to Phosphoserine; by host.

Belongs to the gammacoronavirus nucleocapsid protein family. As to quaternary structure, homooligomer. Both monomeric and oligomeric forms interact with RNA. Interacts with protein M. Interacts with NSP3; this interaction serves to tether the genome to the newly translated replicase-transcriptase complex at a very early stage of infection. In terms of processing, ADP-ribosylated. The ADP-ribosylation is retained in the virion during infection. Post-translationally, phosphorylated on serine and threonine residues.

It localises to the virion. Its subcellular location is the host endoplasmic reticulum-Golgi intermediate compartment. The protein resides in the host Golgi apparatus. Functionally, packages the positive strand viral genome RNA into a helical ribonucleocapsid (RNP) and plays a fundamental role during virion assembly through its interactions with the viral genome and membrane protein M. Plays an important role in enhancing the efficiency of subgenomic viral RNA transcription as well as viral replication. The protein is Nucleoprotein of Gallus gallus (Chicken).